The sequence spans 81 residues: Defensin-like protein b (81 aa).

An N-terminal signal peptide occupies residues 1–26 (MRNATFFIVFYVFISLVLSNVQDVTA). 4 cysteine pairs are disulfide-bonded: cysteine 31–cysteine 81, cysteine 42–cysteine 66, cysteine 50–cysteine 76, and cysteine 64–cysteine 78.

The protein belongs to the DEFL family. As to expression, expressed in microspores and in young and mature anthers.

It is found in the secreted. Involved in self-incompatibility. The protein is Defensin-like protein b (SCRb-1) of Arabidopsis lyrata (Lyre-leaved rock-cress).